The sequence spans 101 residues: Urease subunit gamma (101 aa).

It belongs to the urease gamma subunit family. As to quaternary structure, heterotrimer of UreA (gamma), UreB (beta) and UreC (alpha) subunits. Three heterotrimers associate to form the active enzyme.

It localises to the cytoplasm. The catalysed reaction is urea + 2 H2O + H(+) = hydrogencarbonate + 2 NH4(+). It functions in the pathway nitrogen metabolism; urea degradation; CO(2) and NH(3) from urea (urease route): step 1/1. This is Urease subunit gamma from Ureaplasma parvum serovar 3 (strain ATCC 27815 / 27 / NCTC 11736).